Consider the following 336-residue polypeptide: CST complex subunit STN1 (336 aa).

The OB DNA-binding region spans 49 to 126; that stretch reads VDILGTVVCV…EVVASIFYKV (78 aa). Winged helix-turn-helix (wHTH) stretches follow at residues 162-263 and 264-336; these read QSQE…YVTD and HDKE…YTAF.

It belongs to the CTC1 family. In terms of assembly, component of the CST complex.

The protein resides in the nucleus. It is found in the chromosome. It localises to the telomere. Component of the CST complex proposed to act as a specialized replication factor promoting DNA replication under conditions of replication stress or natural replication barriers such as the telomere duplex. The CST complex binds single-stranded DNA with high affinity in a sequence-independent manner, while isolated subunits bind DNA with low affinity by themselves. Initially the CST complex has been proposed to protect telomeres from DNA degradation. However, the CST complex has been shown to be involved in several aspects of telomere replication. The polypeptide is CST complex subunit STN1 (Aquarana catesbeiana (American bullfrog)).